Here is a 2161-residue protein sequence, read N- to C-terminus: SH3 and multiple ankyrin repeat domains protein 1 (2161 aa).

Positions 1 to 53 (MTHSPATSEDEERHSASECPEGGSESDSSPDGPGRGPRGTRGQGSGAPGSLAS) are disordered. The span at 17–32 (SECPEGGSESDSSPDG) shows a compositional bias: low complexity. Residues 33–47 (PGRGPRGTRGQGSGA) show a composition bias toward gly residues. A Phosphotyrosine modification is found at Tyr-186. ANK repeat units follow at residues 212–245 (SGET…FRAR), 246–278 (DGMT…YKDR), 279–312 (RGLT…IADE), 313–345 (NGWQ…AQNA), 346–378 (SGNT…VKNN), and 379–395 (NGQT…NFEL). 2 disordered regions span residues 412 to 433 (ESPK…VPPA) and 455 to 546 (GAAS…SRGR). Positions 455-479 (GAASSGAPGPTSGSQGQSQPSAPTT) are enriched in low complexity. Residues 527 to 542 (PAGGTGGSGGPGGSLG) are compositionally biased toward gly residues. The residue at position 540 (Ser-540) is a Phosphoserine. Arg-544 carries the omega-N-methylarginine modification. The region spanning 554–613 (VPGRSFMAVKSYQAQAEGEISLSKGEKIKVLSIGEGGFWEGQVKGRVGWFPSDCLEEVAN) is the SH3 domain. A PDZ domain is found at 663–757 (TVLLQKKDSE…TLMVKVVMVT (95 aa)). Phosphoserine is present on residues Ser-671 and Ser-791. Positions 832–886 (TISASESPGPGGLASLGKHRPKGFFATESSFDPHHRAQPSYERPSFLPPGPGLML) are disordered. Ser-890 is subject to Phosphoserine. 7 disordered regions span residues 909–1229 (SRSL…LDFT), 1241–1289 (RREG…KSID), 1353–1720 (LGLA…GVAS), 1734–1785 (GQAF…PTSP), 1827–1860 (LPTA…QPQA), 1892–1983 (PWAR…TRHL), and 1996–2023 (RRAP…LPIL). The span at 920-939 (IPPPPTTSPPEPPYSTPPVP) shows a compositional bias: pro residues. Arg-950 is modified (omega-N-methylarginine). Over residues 996–1020 (AHHHPPHHHHHHAPPPQPHHHHAHP) the composition is skewed to basic residues. Arg-1051, Arg-1090, and Arg-1101 each carry omega-N-methylarginine. A compositionally biased stretch (pro residues) spans 1127 to 1144 (PPAPSPTSPASPQPPPAV). Low complexity predominate over residues 1164–1181 (STSSSGRSSQGSSTEAEP). Over residues 1199–1220 (SPAPAMSPVPPSPSPVPTPASP) the composition is skewed to pro residues. Residues 1241–1252 (RREGGWQNEARR) show a composition bias toward basic and acidic residues. Arg-1253 is modified (asymmetric dimethylarginine). The residue at position 1287 (Ser-1287) is a Phosphoserine. Over residues 1359–1368 (ARERALKESS) the composition is skewed to basic and acidic residues. A compositionally biased stretch (pro residues) spans 1374-1391 (PQPPPRPPSPRYEAPPPT). At Arg-1423 the chain carries Omega-N-methylarginine. Ser-1436 carries the post-translational modification Phosphoserine. Pro residues-rich tracts occupy residues 1517–1532 (GVPP…PSPT) and 1583–1609 (PLTP…PPPA). Over residues 1618–1636 (DSTASSLTSYDSEVATLTQ) the composition is skewed to polar residues. A compositionally biased stretch (pro residues) spans 1644–1670 (DPHPPGPPAPAAPAPAAPQPGPDPPPG). Residues 1678-1688 (VDSRSSSDHPL) are compositionally biased toward basic and acidic residues. Over residues 1692–1702 (SSASTLSSLSA) the composition is skewed to low complexity. 2 stretches are compositionally biased toward gly residues: residues 1703-1718 (EGGG…GAGV) and 1764-1774 (ASGGLRPGPSG). The span at 1775-1785 (GLRDPVTPTSP) shows a compositional bias: low complexity. The span at 1844-1855 (PGPPPPPLPGPL) shows a compositional bias: pro residues. Omega-N-methylarginine is present on Arg-1895. Composition is skewed to low complexity over residues 1917–1940 (SSLQ…VSSL), 1954–1980 (TGTG…STST), and 1996–2006 (RRAPSPSLLPA). Arg-2016, Arg-2036, and Arg-2074 each carry omega-N-methylarginine. In terms of domain architecture, SAM spans 2098–2161 (WTKFDVADWL…DRALKFFLER (64 aa)).

Belongs to the SHANK family. In terms of assembly, may homomultimerize via its SAM domain. Interacts with the C-terminus of SSTR2 via the PDZ domain. Interacts with IGSF9, SHARPIN, SPTAN1, HOMER1 and DLGAP1/GKAP isoforms 1 and 2. Part of a complex with DLG4/PSD-95 and DLGAP1/GKAP. Interacts with BAIAP2. Interacts with HOMER1 and HOMER3. In terms of tissue distribution, expressed in brain particularly in the amygdala, hippocampus, substantia nigra and thalamus. Isoform 2 seems to be expressed ubiquitously.

It localises to the cytoplasm. The protein resides in the postsynaptic density. It is found in the synapse. In terms of biological role, seems to be an adapter protein in the postsynaptic density (PSD) of excitatory synapses that interconnects receptors of the postsynaptic membrane including NMDA-type and metabotropic glutamate receptors via complexes with GKAP/PSD-95 and Homer, respectively, and the actin-based cytoskeleton. Plays a role in the structural and functional organization of the dendritic spine and synaptic junction. This is SH3 and multiple ankyrin repeat domains protein 1 (SHANK1) from Homo sapiens (Human).